The chain runs to 310 residues: Coproporphyrin III ferrochelatase (310 aa).

Tyr13 serves as a coordination point for Fe-coproporphyrin III. Tyr13 is a binding site for N-methylmesoporphyrin. Glu20 contacts Mg(2+). Residue Arg30 coordinates Fe-coproporphyrin III. 31-33 (RGR) serves as a coordination point for N-methylmesoporphyrin. Arg46 provides a ligand contact to Mg(2+). Fe-coproporphyrin III is bound by residues 46 to 47 (RY), Ser54, and Tyr125. 2 residues coordinate N-methylmesoporphyrin: His183 and Lys188. A Fe(2+)-binding site is contributed by His183. Position 264 (Glu264) interacts with Fe(2+). Residues Asp268 and Glu272 each coordinate Mg(2+).

This sequence belongs to the ferrochelatase family. In terms of assembly, monomer. Interacts with frataxin/Fra.

It localises to the cytoplasm. The enzyme catalyses Fe-coproporphyrin III + 2 H(+) = coproporphyrin III + Fe(2+). The protein operates within porphyrin-containing compound metabolism; protoheme biosynthesis. Its activity is regulated as follows. Stimulated by Mg(2+). Inhibited by Cd(2+). Inhibited by N-methylmesoporphyrin (N-MeMP) and 2,4-disulfonic acid deuteroporphyrin IX (dSDP). In terms of biological role, involved in coproporphyrin-dependent heme b biosynthesis. Catalyzes the insertion of ferrous iron into coproporphyrin III to form Fe-coproporphyrin III. It can also insert iron into protoporphyrin IX. Has weaker activity with 2,4 disulfonate, deuteroporphyrin and 2,4 hydroxyethyl. In vitro, can also use Zn(2+) or Cu(2+). This chain is Coproporphyrin III ferrochelatase, found in Bacillus subtilis (strain 168).